Reading from the N-terminus, the 215-residue chain is Meiotic chromosome segregation protein P8B7.28c (215 aa).

A disordered region spans residues 159-202; sequence TINSEYADDVSDNTDEERTESKGQQESNSAEEYDDDDSDEDRME. 2 stretches are compositionally biased toward acidic residues: residues 164–176 and 187–201; these read YADD…DEER and SAEE…EDRM.

The protein resides in the nucleus. It is found in the nucleolus. Required for meiotic chromosome segregation. In Schizosaccharomyces pombe (strain 972 / ATCC 24843) (Fission yeast), this protein is Meiotic chromosome segregation protein P8B7.28c.